A 387-amino-acid polypeptide reads, in one-letter code: Paralemmin-1 (387 aa).

Methionine 1 carries the N-acetylmethionine modification. Positions 7 to 104 (ETISQQERLQ…IEELENADTL (98 aa)) form a coiled coil. Disordered stretches follow at residues 22 to 78 (RRRQ…QEDE) and 98 to 133 (LENA…DRKA). Basic and acidic residues-rich tracts occupy residues 25-41 (QAEV…DRRQ) and 69-78 (DMRKQMQEDE). Position 116 is a phosphoserine (serine 116). A compositionally biased stretch (pro residues) spans 116 to 125 (SPGPVVPAPC). Phosphothreonine is present on residues threonine 142 and threonine 146. Serine 163 is modified (phosphoserine). Position 244 is a phosphothreonine (threonine 244). Serine 246 is subject to Phosphoserine. 2 disordered regions span residues 246 to 297 (SEAG…QEPP) and 334 to 378 (AAEP…DMKK). Positions 258 to 273 (GPSEEVVRTTPSRREI) are enriched in basic and acidic residues. The span at 286 to 297 (GPPGIQPGQEPP) shows a compositional bias: low complexity. 2 positions are modified to phosphoserine: serine 346 and serine 369. Residues cysteine 381 and cysteine 383 are each lipidated (S-palmitoyl cysteine). Cysteine 384 bears the Cysteine methyl ester mark. Cysteine 384 is lipidated: S-farnesyl cysteine. The propeptide at 385–387 (SIM) is removed in mature form.

This sequence belongs to the paralemmin family. In terms of assembly, interacts with dopamine receptor DRD3. Post-translationally, phosphorylated.

The protein localises to the cell membrane. It is found in the cell projection. It localises to the filopodium membrane. Its subcellular location is the axon. The protein resides in the dendrite. The protein localises to the dendritic spine. It is found in the basolateral cell membrane. It localises to the apicolateral cell membrane. Functionally, involved in plasma membrane dynamics and cell process formation. Necessary for axonal and dendritic filopodia induction, for dendritic spine maturation and synapse formation in a palmitoylation-dependent manner. This is Paralemmin-1 (PALM) from Sus scrofa (Pig).